A 357-amino-acid polypeptide reads, in one-letter code: Probable protein phosphatase 2C 60 (357 aa).

The PPM-type phosphatase domain maps to Arg23–Phe329. The Mn(2+) site is built by Asp57, Gly58, Asp272, and Asp320. The tract at residues Asn331–Asn357 is disordered. The segment covering Gly348–Asn357 has biased composition (basic and acidic residues).

This sequence belongs to the PP2C family. Mg(2+) serves as cofactor. It depends on Mn(2+) as a cofactor.

The enzyme catalyses O-phospho-L-seryl-[protein] + H2O = L-seryl-[protein] + phosphate. It catalyses the reaction O-phospho-L-threonyl-[protein] + H2O = L-threonyl-[protein] + phosphate. This is Probable protein phosphatase 2C 60 from Arabidopsis thaliana (Mouse-ear cress).